A 360-amino-acid polypeptide reads, in one-letter code: tRNA-specific 2-thiouridylase MnmA (360 aa).

ATP contacts are provided by residues 9 to 16 and Leu-35; that span reads AMSGGVDS. The active-site Nucleophile is the Cys-104. Cys-104 and Cys-197 are joined by a disulfide. An ATP-binding site is contributed by Gly-128. An interaction with tRNA region spans residues 147 to 149; sequence KDQ. Residue Cys-197 is the Cysteine persulfide intermediate of the active site.

This sequence belongs to the MnmA/TRMU family.

The protein resides in the cytoplasm. The enzyme catalyses S-sulfanyl-L-cysteinyl-[protein] + uridine(34) in tRNA + AH2 + ATP = 2-thiouridine(34) in tRNA + L-cysteinyl-[protein] + A + AMP + diphosphate + H(+). Functionally, catalyzes the 2-thiolation of uridine at the wobble position (U34) of tRNA, leading to the formation of s(2)U34. The protein is tRNA-specific 2-thiouridylase MnmA of Salinispora tropica (strain ATCC BAA-916 / DSM 44818 / JCM 13857 / NBRC 105044 / CNB-440).